The chain runs to 444 residues: UDP-N-acetylmuramoylalanine--D-glutamate ligase (444 aa).

Glycine 113 to threonine 119 contributes to the ATP binding site.

This sequence belongs to the MurCDEF family.

It localises to the cytoplasm. It carries out the reaction UDP-N-acetyl-alpha-D-muramoyl-L-alanine + D-glutamate + ATP = UDP-N-acetyl-alpha-D-muramoyl-L-alanyl-D-glutamate + ADP + phosphate + H(+). Its pathway is cell wall biogenesis; peptidoglycan biosynthesis. In terms of biological role, cell wall formation. Catalyzes the addition of glutamate to the nucleotide precursor UDP-N-acetylmuramoyl-L-alanine (UMA). This Blochmanniella floridana protein is UDP-N-acetylmuramoylalanine--D-glutamate ligase.